The chain runs to 729 residues: Triadin (729 aa).

The tract at residues 1–28 (MTEITAEGNASTTTTVIDSKNGSVPKSP) is disordered. Residues 1–47 (MTEITAEGNASTTTTVIDSKNGSVPKSPGKVLKRTVTEDIVTTFSSP) lie on the Cytoplasmic side of the membrane. The segment covering 8-24 (GNASTTTTVIDSKNGSV) has biased composition (polar residues). Residues 48 to 68 (AAWLLVIALIITWSAVAIVMF) traverse the membrane as a helical segment. Residues 69–729 (DLVDYKNFSA…NSPGQKQQGQ (661 aa)) are Lumenal-facing. Residue Asn-75 is glycosylated (N-linked (GlcNAc...) asparagine). A compositionally biased stretch (acidic residues) spans 117 to 129 (EDEEDDDGDEDTD). Disordered stretches follow at residues 117–265 (EDEE…EQKD), 281–682 (DLKP…PTKQ), and 705–729 (PFTP…QQGQ). Basic and acidic residues-rich tracts occupy residues 130-265 (KGEI…EQKD), 309-357 (LEEK…KASE), 371-433 (AKKD…KEEI), 444-509 (GKKE…EVKP), 516-531 (GKKE…KEAK), 538-562 (VQIH…EKVL), 580-598 (KKAE…DKPK), and 609-674 (ESGK…KEGT). N-linked (GlcNAc...) asparagine glycosylation is present at Asn-647. Over residues 715–729 (SSGQANSPGQKQQGQ) the composition is skewed to polar residues.

Homooligomer of variable subunit number; disulfide-linked. Interacts with CASQ1 and RYR1 in skeletal muscle. Interacts with CASQ2. Phosphorylated by CaMK2. In terms of processing, N-glycosylated.

The protein resides in the cell membrane. It is found in the sarcoplasmic reticulum membrane. In terms of biological role, contributes to the regulation of lumenal Ca2+ release via the sarcoplasmic reticulum calcium release channels RYR1 and RYR2, a key step in triggering skeletal and heart muscle contraction. Required for normal organization of the triad junction, where T-tubules and the sarcoplasmic reticulum terminal cisternae are in close contact. Required for normal skeletal muscle strength. Plays a role in excitation-contraction coupling in the heart and in regulating the rate of heart beats. The polypeptide is Triadin (TRDN) (Homo sapiens (Human)).